Here is a 301-residue protein sequence, read N- to C-terminus: Acetylglutamate kinase (301 aa).

Substrate is bound by residues 68–69 (GG), R90, and N195.

Belongs to the acetylglutamate kinase family. ArgB subfamily.

The protein localises to the cytoplasm. The catalysed reaction is N-acetyl-L-glutamate + ATP = N-acetyl-L-glutamyl 5-phosphate + ADP. It functions in the pathway amino-acid biosynthesis; L-arginine biosynthesis; N(2)-acetyl-L-ornithine from L-glutamate: step 2/4. Its function is as follows. Catalyzes the ATP-dependent phosphorylation of N-acetyl-L-glutamate. This chain is Acetylglutamate kinase, found in Pseudomonas savastanoi pv. phaseolicola (strain 1448A / Race 6) (Pseudomonas syringae pv. phaseolicola (strain 1448A / Race 6)).